The primary structure comprises 432 residues: MKFTLVATVLLTFSLSAFAVEYPVLTTASPDQVGFDSQKLHRLDGWIQNQIDAGYPSINLLVIKDNHIVLQKAWGYAKKYDGSTLLAHPILATTNTMYDLASNTKMYATNFALQKLVYEGKIDVNDLVSKYIPDFKDMPGDKIKGKDKLRIIDILHHVAGFPADPQYPNKNVAGKLFSQSKSTTLEMIKKTPLEYQPGSKHIYSDVDYMILGFIIESITAMPLDRYVETTIYKPLGLKHTVFNPLMKGFTPPQIAATELHGNTRDGVIHFPNIRTNTLWGQVHDEKAWYSMGGVSGHAGLFSDTHDIAVLMQVMLNGGGYGNVKLFDDKTVAQFTRRSPEDATFGLGWRVNGNASMTPTFGVLASPQTYGHTGWTGTLTSIDPVNHMAIVILGNRPHSPVANPKVNPNVFVSGLLPAATYGWIVDQIYGSLK.

A helical; Signal-anchor transmembrane segment spans residues 7–25 (ATVLLTFSLSAFAVEYPVL).

The protein belongs to the peptidase S12 family. YfeW subfamily.

It localises to the cell inner membrane. It carries out the reaction Preferential cleavage: (Ac)2-L-Lys-D-Ala-|-D-Ala. Also transpeptidation of peptidyl-alanyl moieties that are N-acyl substituents of D-alanine.. The chain is Putative D-alanyl-D-alanine carboxypeptidase from Salmonella agona (strain SL483).